The primary structure comprises 625 residues: Exonuclease mut-7 homolog (625 aa).

Residue Ser-17 is modified to Phosphoserine. The 3'-5' exonuclease domain occupies 410-602 (LIIVNKADEF…IYNTLIERVS (193 aa)).

Belongs to the mut-7 family. As to quaternary structure, interacts with AGO1; the interaction is not RNA dependent. It depends on Mg(2+) as a cofactor.

Possesses 3'-5' exoribonuclease activity. Required for 3'-end trimming of AGO1-bound miRNAs, in particular multiple-isoform miRNAs, which represents a critical step in miRNA maturation. The sequence is that of Exonuclease mut-7 homolog (Nbr) from Drosophila melanogaster (Fruit fly).